We begin with the raw amino-acid sequence, 153 residues long: MPPPSLAMVSGQALPAFLLCSTLLVIKMYAVAVITGQVRLRKKAFANPEDALRHGGLQFHRDDQDVERCLRAHRNDMETIYPFLFLGLVYSFLGPDPFVAQMHFLVFFLGRMVHTVAYLGKLRAPTRSLAYTVAQLPCASMALQIVWEAARHL.

At M1–A13 the chain is on the lumenal side. A helical transmembrane segment spans residues L14–K42. Position 39 (R39) interacts with glutathione. Topologically, residues K43–R61 are cytoplasmic. A helical membrane pass occupies residues D62 to S91. R74 to E78 contacts glutathione. Residues F92–D96 lie on the Lumenal side of the membrane. Residues P97–G120 traverse the membrane as a helical segment. The glutathione site is built by H114 and Y118. Residues K121 to A124 lie on the Cytoplasmic side of the membrane. Residues P125–L153 traverse the membrane as a helical segment. A glutathione-binding site is contributed by R127 to Y131.

The protein belongs to the MAPEG family. In terms of assembly, homotrimer. Glutathione is required as a cofactor.

Its subcellular location is the membrane. The protein resides in the cytoplasm. The protein localises to the perinuclear region. It catalyses the reaction prostaglandin H2 = prostaglandin E2. The catalysed reaction is 2-glyceryl-prostaglandin H2 = 2-glyceryl-prostaglandin E2. It carries out the reaction prostaglandin G2 = (15S)-15-hydroperoxy-prostaglandin E2. The enzyme catalyses 1-chloro-2,4-dinitrobenzene + glutathione = 2,4-dinitrophenyl-S-glutathione + chloride + H(+). It catalyses the reaction (5S)-hydroperoxy-(6E,8Z,11Z,14Z)-eicosatetraenoate + 2 glutathione = (5S)-hydroxy-(6E,8Z,11Z,14Z)-eicosatetraenoate + glutathione disulfide + H2O. It functions in the pathway lipid metabolism; prostaglandin biosynthesis. Functionally, terminal enzyme of the cyclooxygenase (COX)-2-mediated prostaglandin E2 (PGE2) biosynthetic pathway. Catalyzes the glutathione-dependent oxidoreduction of prostaglandin endoperoxide H2 (PGH2) to prostaglandin E2 (PGE2) in response to inflammatory stimuli. Plays a key role in inflammation response, fever and pain. Also catalyzes the oxidoreduction of endocannabinoids into prostaglandin glycerol esters and PGG2 into 15-hydroperoxy-PGE2. In addition, displays low glutathione transferase and glutathione-dependent peroxidase activities, toward 1-chloro-2,4-dinitrobenzene and 5-hydroperoxyicosatetraenoic acid (5-HPETE), respectively. The protein is Prostaglandin E synthase (PTGES) of Equus caballus (Horse).